Here is a 233-residue protein sequence, read N- to C-terminus: Large ribosomal subunit protein uL1 (233 aa).

This sequence belongs to the universal ribosomal protein uL1 family. In terms of assembly, part of the 50S ribosomal subunit.

Binds directly to 23S rRNA. The L1 stalk is quite mobile in the ribosome, and is involved in E site tRNA release. In terms of biological role, protein L1 is also a translational repressor protein, it controls the translation of the L11 operon by binding to its mRNA. This is Large ribosomal subunit protein uL1 from Nautilia profundicola (strain ATCC BAA-1463 / DSM 18972 / AmH).